The following is a 498-amino-acid chain: ATP synthase subunit beta, chloroplastic (498 aa).

172–179 lines the ATP pocket; it reads GGAGVGKT.

Belongs to the ATPase alpha/beta chains family. F-type ATPases have 2 components, CF(1) - the catalytic core - and CF(0) - the membrane proton channel. CF(1) has five subunits: alpha(3), beta(3), gamma(1), delta(1), epsilon(1). CF(0) has four main subunits: a(1), b(1), b'(1) and c(9-12).

The protein localises to the plastid. Its subcellular location is the chloroplast thylakoid membrane. It carries out the reaction ATP + H2O + 4 H(+)(in) = ADP + phosphate + 5 H(+)(out). Produces ATP from ADP in the presence of a proton gradient across the membrane. The catalytic sites are hosted primarily by the beta subunits. The sequence is that of ATP synthase subunit beta, chloroplastic from Illicium oligandrum (Star anise).